We begin with the raw amino-acid sequence, 629 residues long: tRNA uridine 5-carboxymethylaminomethyl modification enzyme MnmG (629 aa).

Residue 13–18 coordinates FAD; the sequence is GGGHAG. An NAD(+)-binding site is contributed by 273–287; that stretch reads GPRYCPSIEDKITRF.

Belongs to the MnmG family. As to quaternary structure, homodimer. Heterotetramer of two MnmE and two MnmG subunits. It depends on FAD as a cofactor.

The protein localises to the cytoplasm. Functionally, NAD-binding protein involved in the addition of a carboxymethylaminomethyl (cmnm) group at the wobble position (U34) of certain tRNAs, forming tRNA-cmnm(5)s(2)U34. The sequence is that of tRNA uridine 5-carboxymethylaminomethyl modification enzyme MnmG from Aeromonas hydrophila subsp. hydrophila (strain ATCC 7966 / DSM 30187 / BCRC 13018 / CCUG 14551 / JCM 1027 / KCTC 2358 / NCIMB 9240 / NCTC 8049).